The chain runs to 1746 residues: Tenascin (1746 aa).

The first 22 residues, 1–22 (MGVVTRLLVGTFLASLALPAQG), serve as a signal peptide directing secretion. The tract at residues 23–185 (GVLKKVIRHK…CEPGWKGPNC (163 aa)) is involved in hexamer formation. N-linked (GlcNAc...) asparagine glycosylation is present at Asn-38. Residues Ser-65, Ser-70, and Ser-72 each carry the phosphoserine modification. Ser-72 is a glycosylation site (O-linked (Xyl...) (chondroitin sulfate) serine). Positions 118–145 (DVKELLSRLEELENLVSSLREQCTSGAG) form a coiled coil. Residues Asn-166 and Asn-184 are each glycosylated (N-linked (GlcNAc...) asparagine). One can recognise an EGF-like 1; incomplete domain in the interval 174–186 (CVCEPGWKGPNCS). EGF-like domains follow at residues 187–217 (EPECPSNCHLRGQCVDGQCVCNEGFTGEDCS), 218–249 (QLACPSDCNDQGKCVNGVCVCFEGYSGVDCSR), 250–280 (ETCPVPCSEEHGRCVDGRCVCQEGFAGEDCN), 281–311 (EPLCLHNCHGRGRCVENECVCDEGFTGEDCG), 312–342 (ELICPKDCFDRGRCINGTCYCDEGFEGEDCG), 343–373 (RLACPHGCRGRGRCEEGQCVCDEGFAGADCS), 374–404 (ERRCPSDCHNRGRCLDGRCECDDGFEGEDCG), 405–435 (ELRCPGGCSGHGRCVNGQCVCDEGRTGEDCS), 436–466 (QLRCPNDCHGRGRCVQGRCECEHGFQGYDCS), 467–497 (EMSCPHDCHQHGRCVNGMCVCDDGYTGEDCR), 498–528 (ELRCPGDCSQRGRCVDGRCVCEHGFAGPDCA), 529–559 (DLACPSDCHGRGRCVNGQCVCHEGFTGKDCG), 560–589 (QRRCPGDCHGQGRCVDGQCVCHEGFTGLDC), and 590–620 (GQRSCPNDCSNWGQCVSGRCICNEGYSGEDC). Cystine bridges form between Cys-190–Cys-200, Cys-194–Cys-205, Cys-207–Cys-216, Cys-221–Cys-231, Cys-225–Cys-236, Cys-238–Cys-247, Cys-252–Cys-263, Cys-256–Cys-268, Cys-270–Cys-279, Cys-284–Cys-294, Cys-288–Cys-299, Cys-301–Cys-310, Cys-315–Cys-325, Cys-319–Cys-330, Cys-332–Cys-341, Cys-346–Cys-356, Cys-350–Cys-361, Cys-363–Cys-372, Cys-377–Cys-387, Cys-381–Cys-392, Cys-394–Cys-403, Cys-408–Cys-418, Cys-412–Cys-423, Cys-425–Cys-434, Cys-439–Cys-449, Cys-443–Cys-454, Cys-456–Cys-465, Cys-470–Cys-480, Cys-474–Cys-485, Cys-487–Cys-496, Cys-501–Cys-511, Cys-505–Cys-516, Cys-518–Cys-527, Cys-532–Cys-542, Cys-536–Cys-547, Cys-549–Cys-558, Cys-563–Cys-573, Cys-567–Cys-578, Cys-580–Cys-589, Cys-594–Cys-604, Cys-598–Cys-609, and Cys-611–Cys-620. Asn-327 carries an N-linked (GlcNAc...) asparagine glycan. 10 consecutive Fibronectin type-III domains span residues 625 to 717 (PPKD…TPEG), 718 to 801 (LKFK…VTTT), 805 to 894 (APSQ…TGLD), 895 to 988 (APRN…LDPP), 989 to 1075 (KDFR…AGEP), 1076 to 1166 (EIGN…EAEP), 1167 to 1256 (EVDN…TAMG), 1257 to 1346 (SPKE…ALDG), 1347 to 1433 (PSGL…TDLD), and 1434 to 1522 (SPRD…IGLL). A glycan (N-linked (GlcNAc...) asparagine) is linked at Asn-788. The residue at position 905 (Thr-905) is a Phosphothreonine. Residues Asn-1034, Asn-1079, and Asn-1121 are each glycosylated (N-linked (GlcNAc...) asparagine). A glycan (N-linked (GlcNAc...) asparagine) is linked at Asn-1354. Positions 1520-1735 (GLLYPFPRDC…FAEMKLRPSN (216 aa)) constitute a Fibrinogen C-terminal domain.

Belongs to the tenascin family. As to quaternary structure, homohexamer; disulfide-linked. A homotrimer may be formed in the triple coiled-coil region and may be stabilized by disulfide rings at both ends. Two of such half-hexabrachions may be disulfide linked within the central globule. Interacts with CSPG4. Interacts (via the 3rd fibronectin type-III domain) with integrin ITGA9:ITGB1. Submaxillary glands and brain.

Its subcellular location is the secreted. The protein resides in the extracellular space. It localises to the extracellular matrix. Its function is as follows. Extracellular matrix protein implicated in guidance of migrating neurons as well as axons during development, synaptic plasticity as well as neuronal regeneration. Promotes neurite outgrowth from cortical neurons grown on a monolayer of astrocytes. Ligand for integrins alpha-8/beta-1, alpha-9/beta-1, alpha-V/beta-3 and alpha-V/beta-6. In tumors, stimulates angiogenesis by elongation, migration and sprouting of endothelial cells. The polypeptide is Tenascin (TNC) (Sus scrofa (Pig)).